Reading from the N-terminus, the 309-residue chain is MSAKIIRIATRQSPLALWQANHVREMLVKQWPNLSIELLPMITSGDRFLKDKLLSAGGKGLFVKELEEALLDKRADLAVHSTKDMPAQLPDGLSLAAICKRDNPFDALISPRFKSLDALPKNAIIGTSSLRRQSQLLAYNPNLQIKTLRGNIHTRLSKLESGEYQAIILAAAGLERMGLAHHITQLIPDDIMLPTCAQGALCIECRTDDLEIQELIHGLNDPISALCVHTERRVNAKLGGNCHIPFAVYCTITAEKLLLLRAKVLNLDGSQMIDDEQQGKIEEAEIIADRCTESLMTKGAMSLLSTIPS.

Cys242 carries the post-translational modification S-(dipyrrolylmethanemethyl)cysteine.

It belongs to the HMBS family. In terms of assembly, monomer. It depends on dipyrromethane as a cofactor.

It catalyses the reaction 4 porphobilinogen + H2O = hydroxymethylbilane + 4 NH4(+). The protein operates within porphyrin-containing compound metabolism; protoporphyrin-IX biosynthesis; coproporphyrinogen-III from 5-aminolevulinate: step 2/4. Functionally, tetrapolymerization of the monopyrrole PBG into the hydroxymethylbilane pre-uroporphyrinogen in several discrete steps. This chain is Porphobilinogen deaminase, found in Legionella pneumophila (strain Paris).